A 359-amino-acid chain; its full sequence is Alanine racemase, biosynthetic (359 aa).

Lysine 34 acts as the Proton acceptor; specific for D-alanine in catalysis. Lysine 34 carries the post-translational modification N6-(pyridoxal phosphate)lysine. A substrate-binding site is contributed by arginine 129. Tyrosine 255 (proton acceptor; specific for L-alanine) is an active-site residue. A substrate-binding site is contributed by methionine 303.

It belongs to the alanine racemase family. Pyridoxal 5'-phosphate is required as a cofactor.

The catalysed reaction is L-alanine = D-alanine. It functions in the pathway amino-acid biosynthesis; D-alanine biosynthesis; D-alanine from L-alanine: step 1/1. Its pathway is cell wall biogenesis; peptidoglycan biosynthesis. In terms of biological role, catalyzes the interconversion of L-alanine and D-alanine. Provides the D-alanine required for cell wall biosynthesis. This chain is Alanine racemase, biosynthetic (alr), found in Salmonella typhi.